We begin with the raw amino-acid sequence, 426 residues long: MLDRKFILQNAQLVAENSAKRGVSVDVDAICRLEAERMDALKQAEELNRQANEVSKQIKSAKDNDERQELIAKGRSLREQKDAAGAAQDRLEAEILELQTILPNMTHPDVPEGGEHDANEIGRGKTPVPEMDFQPLDHLQLGEKHDLFDFEGGARVAGSGFYFLRNAAVRLDLALQQFAISHLAGKGFTPVSTPDLALTSVLQGTGFNPRGPETQIYSIENTELNLVATAEIPLGGMLSGQILASEELPLRYCGLSHCFRTEAGAAGRASKGLYRVHQFTKVEMFAFTLPDQSTAMHEEMRELECEIFDALEVPYRVIDTATGDLGGPAYRKYDLEAWMPGRGESGDWGEVTSTSNCTDYQARRLNVRSKSNTQKGTDFVHTLNGTAIATGRAMIAILENHQRADGTINVPEILRPWVGCDVLKCE.

229–231 serves as a coordination point for L-serine; it reads TAE. ATP contacts are provided by residues 260–262 and V276; that span reads RTE. L-serine is bound at residue E283. 350-353 contributes to the ATP binding site; the sequence is EVTS. Residue T386 coordinates L-serine.

The protein belongs to the class-II aminoacyl-tRNA synthetase family. Type-1 seryl-tRNA synthetase subfamily. In terms of assembly, homodimer. The tRNA molecule binds across the dimer.

The protein resides in the cytoplasm. It catalyses the reaction tRNA(Ser) + L-serine + ATP = L-seryl-tRNA(Ser) + AMP + diphosphate + H(+). The catalysed reaction is tRNA(Sec) + L-serine + ATP = L-seryl-tRNA(Sec) + AMP + diphosphate + H(+). It participates in aminoacyl-tRNA biosynthesis; selenocysteinyl-tRNA(Sec) biosynthesis; L-seryl-tRNA(Sec) from L-serine and tRNA(Sec): step 1/1. In terms of biological role, catalyzes the attachment of serine to tRNA(Ser). Is also able to aminoacylate tRNA(Sec) with serine, to form the misacylated tRNA L-seryl-tRNA(Sec), which will be further converted into selenocysteinyl-tRNA(Sec). The chain is Serine--tRNA ligase from Rhodopirellula baltica (strain DSM 10527 / NCIMB 13988 / SH1).